A 172-amino-acid polypeptide reads, in one-letter code: Oleosin 18 kDa (172 aa).

Ala-2 carries the N-acetylalanine modification. A polar region spans residues 2–38; sequence ADRDRAGQYYQQQRGQVGETVKGILPEKAPSASQALT. A hydrophobic region spans residues 39–110; it reads VATLFPLGGL…GGLSSLTFLA (72 aa). 3 helical membrane-spanning segments follow: residues 42 to 62, 70 to 90, and 91 to 111; these read LFPL…ASVV, VFLI…LAVA, and GFLT…FLAN. A disordered region spans residues 147 to 172; that stretch reads HAIQGRADQAGTGAGAGGGAGTKTSS. The segment covering 158–172 has biased composition (gly residues); that stretch reads TGAGAGGGAGTKTSS.

This sequence belongs to the oleosin family.

It is found in the lipid droplet. Its subcellular location is the membrane. Functionally, may have a structural role to stabilize the lipid body during desiccation of the seed by preventing coalescence of the oil. Probably interacts with both lipid and phospholipid moieties of lipid bodies. May also provide recognition signals for specific lipase anchorage in lipolysis during seedling growth. The chain is Oleosin 18 kDa (OLE18) from Oryza sativa subsp. indica (Rice).